A 312-amino-acid chain; its full sequence is L-lactate dehydrogenase (312 aa).

The NAD(+) site is built by Val14, Asp35, and Tyr66. Residues Gln83 and Arg90 each contribute to the substrate site. NAD(+) is bound by residues Ser103, 120-122, and Ser145; that span reads ASN. 122–125 serves as a coordination point for substrate; that stretch reads NPVD. Substrate is bound at residue 150–153; it reads DSAR. The active-site Proton acceptor is the His177. At Tyr220 the chain carries Phosphotyrosine. Residue Thr229 participates in substrate binding.

This sequence belongs to the LDH/MDH superfamily. LDH family. As to quaternary structure, homotetramer.

It is found in the cytoplasm. The enzyme catalyses (S)-lactate + NAD(+) = pyruvate + NADH + H(+). Its pathway is fermentation; pyruvate fermentation to lactate; (S)-lactate from pyruvate: step 1/1. Catalyzes the conversion of lactate to pyruvate. This chain is L-lactate dehydrogenase, found in Mycoplasma genitalium (strain ATCC 33530 / DSM 19775 / NCTC 10195 / G37) (Mycoplasmoides genitalium).